The primary structure comprises 435 residues: ATP-dependent protease ATPase subunit HslU (435 aa).

ATP is bound by residues V18, 60 to 65 (GVGKTE), D248, E313, and R385.

Belongs to the ClpX chaperone family. HslU subfamily. In terms of assembly, a double ring-shaped homohexamer of HslV is capped on each side by a ring-shaped HslU homohexamer. The assembly of the HslU/HslV complex is dependent on binding of ATP.

The protein resides in the cytoplasm. Its function is as follows. ATPase subunit of a proteasome-like degradation complex; this subunit has chaperone activity. The binding of ATP and its subsequent hydrolysis by HslU are essential for unfolding of protein substrates subsequently hydrolyzed by HslV. HslU recognizes the N-terminal part of its protein substrates and unfolds these before they are guided to HslV for hydrolysis. The protein is ATP-dependent protease ATPase subunit HslU of Xanthobacter autotrophicus (strain ATCC BAA-1158 / Py2).